The following is a 364-amino-acid chain: Methylthioribose-1-phosphate isomerase (364 aa).

Residues 51–53, Arg88, and Gln199 each bind substrate; that span reads RGA. Asp240 serves as the catalytic Proton donor. Residue 250–251 coordinates substrate; it reads NK.

The protein belongs to the eIF-2B alpha/beta/delta subunits family. MtnA subfamily.

The catalysed reaction is 5-(methylsulfanyl)-alpha-D-ribose 1-phosphate = 5-(methylsulfanyl)-D-ribulose 1-phosphate. It functions in the pathway amino-acid biosynthesis; L-methionine biosynthesis via salvage pathway; L-methionine from S-methyl-5-thio-alpha-D-ribose 1-phosphate: step 1/6. Catalyzes the interconversion of methylthioribose-1-phosphate (MTR-1-P) into methylthioribulose-1-phosphate (MTRu-1-P). This Cereibacter sphaeroides (strain KD131 / KCTC 12085) (Rhodobacter sphaeroides) protein is Methylthioribose-1-phosphate isomerase.